Here is a 701-residue protein sequence, read N- to C-terminus: Centrosomal protein of 83 kDa (701 aa).

The segment covering 1-14 (MVVSTFTDMDTFPN) has biased composition (polar residues). The segment at 1 to 23 (MVVSTFTDMDTFPNNFPPGGDSG) is disordered. Coiled coils occupy residues 40–634 (LRCE…SLIL) and 665–698 (HMQE…ELGS). A Phosphoserine modification is found at serine 698.

This sequence belongs to the CEP83 family. As to quaternary structure, interacts with CEP164 and IFT20.

It is found in the cytoplasm. It localises to the cytoskeleton. The protein resides in the microtubule organizing center. The protein localises to the centrosome. Its subcellular location is the centriole. Its function is as follows. Component of the distal appendage region of the centriole involved in the initiation of primary cilium assembly. May collaborate with IFT20 in the trafficking of ciliary membrane proteins from the Golgi complex to the cilium during the initiation of primary cilium assembly. The chain is Centrosomal protein of 83 kDa (CEP83) from Homo sapiens (Human).